We begin with the raw amino-acid sequence, 122 residues long: MAWKGEVLANNEAGQVTSIIYNPGDVITIVAAGWASYGPTQKWGPQGDREHPDQGLICHDAFCGALVMKIGNSGTIPVNTGLFRWVAPNNVQGAITLIYNDVPGTYGNNSGSFSVNIGKDQS.

It belongs to the LecA/PllA lectin family.

Its subcellular location is the cytoplasm. It is found in the periplasm. It localises to the cell surface. D-galactose specific lectin. Binds in decreasing order of affinity: melibiose, methyl-alpha-D-galactoside, D-galactose, methyl-beta-D-galactoside, N-acetyl-D-galactosamine. Similar to plant lectins in its selective (carbohydrate-specific) hemagglutinating activity. This Pseudomonas aeruginosa (strain ATCC 15692 / DSM 22644 / CIP 104116 / JCM 14847 / LMG 12228 / 1C / PRS 101 / PAO1) protein is PA-I galactophilic lectin (lecA).